A 239-amino-acid chain; its full sequence is Ditrans,polycis-undecaprenyl-diphosphate synthase ((2E,6E)-farnesyl-diphosphate specific) (239 aa).

Asp18 is a catalytic residue. Asp18 is a Mg(2+) binding site. Substrate is bound by residues 19-22 (GNGR), Trp23, Arg31, His35, and 63-65 (SSE). Catalysis depends on Asn66, which acts as the Proton acceptor. Substrate-binding positions include Trp67, Arg69, Arg186, and 192 to 194 (RIS). Glu205 contacts Mg(2+).

Belongs to the UPP synthase family. In terms of assembly, homodimer. Mg(2+) serves as cofactor.

It catalyses the reaction 8 isopentenyl diphosphate + (2E,6E)-farnesyl diphosphate = di-trans,octa-cis-undecaprenyl diphosphate + 8 diphosphate. Functionally, catalyzes the sequential condensation of isopentenyl diphosphate (IPP) with (2E,6E)-farnesyl diphosphate (E,E-FPP) to yield (2Z,6Z,10Z,14Z,18Z,22Z,26Z,30Z,34E,38E)-undecaprenyl diphosphate (di-trans,octa-cis-UPP). UPP is the precursor of glycosyl carrier lipid in the biosynthesis of bacterial cell wall polysaccharide components such as peptidoglycan and lipopolysaccharide. This is Ditrans,polycis-undecaprenyl-diphosphate synthase ((2E,6E)-farnesyl-diphosphate specific) from Haemophilus influenzae (strain ATCC 51907 / DSM 11121 / KW20 / Rd).